Consider the following 384-residue polypeptide: S-adenosylmethionine synthase (384 aa).

An ATP-binding site is contributed by His-15. Asp-17 contributes to the Mg(2+) binding site. Residue Glu-43 coordinates K(+). Positions 56 and 99 each coordinate L-methionine. The segment at 99–109 (QSPDINQGVDR) is flexible loop. Residues 164–166 (DAK), 230–231 (RF), Asp-239, 245–246 (RK), Ala-262, and Lys-266 contribute to the ATP site. Asp-239 lines the L-methionine pocket. Lys-270 provides a ligand contact to L-methionine.

This sequence belongs to the AdoMet synthase family. In terms of assembly, homotetramer; dimer of dimers. Mg(2+) is required as a cofactor. K(+) serves as cofactor.

It is found in the cytoplasm. It catalyses the reaction L-methionine + ATP + H2O = S-adenosyl-L-methionine + phosphate + diphosphate. Its pathway is amino-acid biosynthesis; S-adenosyl-L-methionine biosynthesis; S-adenosyl-L-methionine from L-methionine: step 1/1. Functionally, catalyzes the formation of S-adenosylmethionine (AdoMet) from methionine and ATP. The overall synthetic reaction is composed of two sequential steps, AdoMet formation and the subsequent tripolyphosphate hydrolysis which occurs prior to release of AdoMet from the enzyme. The polypeptide is S-adenosylmethionine synthase (Yersinia pseudotuberculosis serotype IB (strain PB1/+)).